A 614-amino-acid chain; its full sequence is ATP-dependent zinc metalloprotease FtsH (614 aa).

Residues 1–7 (MKKQWKK) lie on the Stromal side of the membrane. The chain crosses the membrane as a helical span at residues 8–28 (IVLFVLPVIITLITLSSFLFY). Residues 29–116 (NQDVVHNWSS…AHPSSSNVNL (88 aa)) are Lumenal-facing. A helical transmembrane segment spans residues 117 to 137 (VSWLSNLLLPLILIITLFFFF). Over 138–614 (RRGNKSSSGP…EFMRIVEERV (477 aa)) the chain is Stromal. 211–218 (GPPGTGKT) contributes to the ATP binding site. Position 432 (His432) interacts with Zn(2+). Residue Glu433 is part of the active site. Zn(2+) is bound by residues His436 and Asp510.

It in the central section; belongs to the AAA ATPase family. In the C-terminal section; belongs to the peptidase M41 family. Homohexamer. It depends on Zn(2+) as a cofactor.

Its subcellular location is the plastid. The protein resides in the chloroplast thylakoid membrane. Functionally, acts as a processive, ATP-dependent zinc metallopeptidase. This is ATP-dependent zinc metalloprotease FtsH from Cyanidium caldarium (Red alga).